A 506-amino-acid chain; its full sequence is Maturase K (506 aa).

The protein belongs to the intron maturase 2 family. MatK subfamily.

Its subcellular location is the plastid. The protein resides in the chloroplast. Its function is as follows. Usually encoded in the trnK tRNA gene intron. Probably assists in splicing its own and other chloroplast group II introns. In Trifolium hybridum (Alsike clover), this protein is Maturase K.